Reading from the N-terminus, the 445-residue chain is Acetylcholine-gated chloride channel subunit acc-2 (445 aa).

Positions 1–26 are cleaved as a signal peptide; that stretch reads MIFTLLSTLPVLIITTELDYSELVHS. The Extracellular segment spans residues 27 to 258; sequence AELVSSSSYI…LHVTIIFERR (232 aa). Residues Asn46, Asn59, Asn121, and Asn162 are each glycosylated (N-linked (GlcNAc...) asparagine). Residues Cys177 and Cys191 are joined by a disulfide bond. A glycan (N-linked (GlcNAc...) asparagine) is linked at Asn218. Residues 259 to 279 traverse the membrane as a helical segment; it reads FIWYFMQAYLPTYLTIFISWI. Topologically, residues 280 to 286 are cytoplasmic; sequence SFSLGSR. A helical membrane pass occupies residues 287 to 307; it reads AIPARTMLGVNSLLAIVFSFG. The Extracellular segment spans residues 308–326; the sequence is NIMRNLPRVSYIKGIDVWM. A helical membrane pass occupies residues 327–347; that stretch reads LVSMTFIFCSLLELAIVGFMV. Over 348–407 the chain is Cytoplasmic; it reads RDETVAKKKQQKKISGNISREESPHGIISERRFMFPPGCSESSKSLSSCTSGWTPERIDS. The chain crosses the membrane as a helical span at residues 408 to 428; sequence ISSVMFPFSFFVFNIIYWFYY. The Extracellular segment spans residues 429–445; that stretch reads IHRKEIIKQNLINRVDG.

This sequence belongs to the ligand-gated ion channel (TC 1.A.9) family. As to quaternary structure, homopentamer (in vitro). May interact with either acc-3 or acc-4; the interactions do not result in significant heteropentameric ion channel activity. In terms of tissue distribution, expressed in RIA, RIG, PHA and AIZ glutamatergic neurons, URX and RIH cholinergic neurons, and in male-specific MCM neurons.

It is found in the cell membrane. Its function is as follows. Acetylcholine-gated chloride channel subunit. Currents in channels are triggered in response to acetylcholine. Channel properties may be modulated by the formation of homomeric and heteromeric channels. The sequence is that of Acetylcholine-gated chloride channel subunit acc-2 from Caenorhabditis elegans.